Reading from the N-terminus, the 428-residue chain is 3-phosphoshikimate 1-carboxyvinyltransferase (428 aa).

K22, S23, and R27 together coordinate 3-phosphoshikimate. A phosphoenolpyruvate-binding site is contributed by K22. The phosphoenolpyruvate site is built by G96 and R124. Residues S170, S171, Q172, S198, D314, N337, and K341 each coordinate 3-phosphoshikimate. Q172 contributes to the phosphoenolpyruvate binding site. The Proton acceptor role is filled by D314. 3 residues coordinate phosphoenolpyruvate: R345, R387, and K412.

The protein belongs to the EPSP synthase family. As to quaternary structure, monomer.

The protein localises to the cytoplasm. The enzyme catalyses 3-phosphoshikimate + phosphoenolpyruvate = 5-O-(1-carboxyvinyl)-3-phosphoshikimate + phosphate. Its pathway is metabolic intermediate biosynthesis; chorismate biosynthesis; chorismate from D-erythrose 4-phosphate and phosphoenolpyruvate: step 6/7. Functionally, catalyzes the transfer of the enolpyruvyl moiety of phosphoenolpyruvate (PEP) to the 5-hydroxyl of shikimate-3-phosphate (S3P) to produce enolpyruvyl shikimate-3-phosphate and inorganic phosphate. This is 3-phosphoshikimate 1-carboxyvinyltransferase from Photobacterium profundum (strain SS9).